Consider the following 237-residue polypeptide: 7-cyano-7-deazaguanine synthase (237 aa).

14-24 (FSGGQDSATCL) is an ATP binding site. Positions 202, 217, 220, and 223 each coordinate Zn(2+).

It belongs to the QueC family. Requires Zn(2+) as cofactor.

It carries out the reaction 7-carboxy-7-deazaguanine + NH4(+) + ATP = 7-cyano-7-deazaguanine + ADP + phosphate + H2O + H(+). The protein operates within purine metabolism; 7-cyano-7-deazaguanine biosynthesis. In terms of biological role, catalyzes the ATP-dependent conversion of 7-carboxy-7-deazaguanine (CDG) to 7-cyano-7-deazaguanine (preQ(0)). In Rhodopseudomonas palustris (strain TIE-1), this protein is 7-cyano-7-deazaguanine synthase.